Consider the following 600-residue polypeptide: Long-chain-fatty-acid--CoA ligase FadD15 (600 aa).

The protein belongs to the ATP-dependent AMP-binding enzyme family.

It catalyses the reaction a long-chain fatty acid + ATP + CoA = a long-chain fatty acyl-CoA + AMP + diphosphate. The catalysed reaction is dodecanoate + ATP + CoA = dodecanoyl-CoA + AMP + diphosphate. It carries out the reaction hexadecanoate + ATP + CoA = hexadecanoyl-CoA + AMP + diphosphate. It participates in lipid metabolism; fatty acid biosynthesis. Functionally, catalyzes the activation of long-chain fatty acids as acyl-coenzyme A (acyl-CoA), which are then transferred to the multifunctional polyketide synthase (PKS) type III for further chain extension. This chain is Long-chain-fatty-acid--CoA ligase FadD15 (fadD15), found in Mycobacterium tuberculosis (strain ATCC 25618 / H37Rv).